A 233-amino-acid polypeptide reads, in one-letter code: Large ribosomal subunit protein uL1 (233 aa).

The protein belongs to the universal ribosomal protein uL1 family. In terms of assembly, part of the 50S ribosomal subunit.

Its function is as follows. Binds directly to 23S rRNA. The L1 stalk is quite mobile in the ribosome, and is involved in E site tRNA release. In terms of biological role, protein L1 is also a translational repressor protein, it controls the translation of the L11 operon by binding to its mRNA. This Pseudoalteromonas atlantica (strain T6c / ATCC BAA-1087) protein is Large ribosomal subunit protein uL1.